The chain runs to 171 residues: Cytochrome c oxidase subunit 5b-2, mitochondrial (171 aa).

The N-terminal 54 residues, 1-54 (MWRRIVSSHLKSISAVGSCAAPSCRHAVVESTHLSLSTRASSIPAYSSIFSRLI), are a transit peptide targeting the mitochondrion. Cys121, Cys145, and Cys148 together coordinate Zn(2+).

The protein belongs to the cytochrome c oxidase subunit 5B (TC 3.D.4.11) family.

It localises to the mitochondrion inner membrane. This protein is one of the nuclear-coded polypeptide chains of cytochrome c oxidase, the terminal oxidase in mitochondrial electron transport. This chain is Cytochrome c oxidase subunit 5b-2, mitochondrial (COX5B-2), found in Arabidopsis thaliana (Mouse-ear cress).